The following is a 453-amino-acid chain: Cysteine desulfurase, mitochondrial (453 aa).

Residues 1-34 (MASKVISATIRRTLTKPHGTFSRCRYLSTAAAAT) constitute a mitochondrion transit peptide. Residues 123 to 124 (AT), N203, Q231, and 251 to 253 (SAH) contribute to the pyridoxal 5'-phosphate site. Position 254 is an N6-(pyridoxal phosphate)lysine (K254). Pyridoxal 5'-phosphate is bound at residue T291. Residue C377 is the Cysteine persulfide intermediate of the active site. [2Fe-2S] cluster is bound at residue C377.

It belongs to the class-V pyridoxal-phosphate-dependent aminotransferase family. NifS/IscS subfamily. As to quaternary structure, interacts with FH. Interacts with SUFE1. The cofactor is pyridoxal 5'-phosphate.

The protein resides in the mitochondrion. It catalyses the reaction (sulfur carrier)-H + L-cysteine = (sulfur carrier)-SH + L-alanine. Its activity is regulated as follows. Threefold increase in the catalytic activity in the presence of FH (frataxin). 30-fold increase in the catalytic activity in the presence of SUFE1. In terms of biological role, catalyzes the removal of elemental sulfur from cysteine to produce alanine. Supplies the inorganic sulfur for iron-sulfur (Fe-S) clusters. In Arabidopsis thaliana (Mouse-ear cress), this protein is Cysteine desulfurase, mitochondrial.